The primary structure comprises 448 residues: tRNA modification GTPase MnmE (448 aa).

Positions 24, 81, and 120 each coordinate (6S)-5-formyl-5,6,7,8-tetrahydrofolate. The region spanning 216–373 (GLNVVLVGAP…LKRTLLREAG (158 aa)) is the TrmE-type G domain. Asparagine 226 contacts K(+). GTP-binding positions include 226-231 (NVGKSS), 245-251 (TDIAGTT), and 270-273 (DTAG). Mg(2+) is bound at residue serine 230. 3 residues coordinate K(+): threonine 245, isoleucine 247, and threonine 250. Position 251 (threonine 251) interacts with Mg(2+). Lysine 448 provides a ligand contact to (6S)-5-formyl-5,6,7,8-tetrahydrofolate.

The protein belongs to the TRAFAC class TrmE-Era-EngA-EngB-Septin-like GTPase superfamily. TrmE GTPase family. In terms of assembly, homodimer. Heterotetramer of two MnmE and two MnmG subunits. K(+) serves as cofactor.

The protein localises to the cytoplasm. Functionally, exhibits a very high intrinsic GTPase hydrolysis rate. Involved in the addition of a carboxymethylaminomethyl (cmnm) group at the wobble position (U34) of certain tRNAs, forming tRNA-cmnm(5)s(2)U34. The protein is tRNA modification GTPase MnmE of Neisseria meningitidis serogroup C (strain 053442).